Reading from the N-terminus, the 306-residue chain is Lipoyl synthase (306 aa).

[4Fe-4S] cluster is bound by residues Cys41, Cys46, Cys52, Cys68, Cys72, Cys75, and Ser281. The 217-residue stretch at 54 to 270 folds into the Radical SAM core domain; sequence GARRTATFMI…RKVAMDKGFK (217 aa). Residues 283-306 form a disordered region; that stretch reads HADEQVNEAAKEKHRLGEEKLQQN.

The protein belongs to the radical SAM superfamily. Lipoyl synthase family. The cofactor is [4Fe-4S] cluster.

Its subcellular location is the cytoplasm. It catalyses the reaction [[Fe-S] cluster scaffold protein carrying a second [4Fe-4S](2+) cluster] + N(6)-octanoyl-L-lysyl-[protein] + 2 oxidized [2Fe-2S]-[ferredoxin] + 2 S-adenosyl-L-methionine + 4 H(+) = [[Fe-S] cluster scaffold protein] + N(6)-[(R)-dihydrolipoyl]-L-lysyl-[protein] + 4 Fe(3+) + 2 hydrogen sulfide + 2 5'-deoxyadenosine + 2 L-methionine + 2 reduced [2Fe-2S]-[ferredoxin]. The protein operates within protein modification; protein lipoylation via endogenous pathway; protein N(6)-(lipoyl)lysine from octanoyl-[acyl-carrier-protein]. Functionally, catalyzes the radical-mediated insertion of two sulfur atoms into the C-6 and C-8 positions of the octanoyl moiety bound to the lipoyl domains of lipoate-dependent enzymes, thereby converting the octanoylated domains into lipoylated derivatives. In Staphylococcus haemolyticus (strain JCSC1435), this protein is Lipoyl synthase.